The sequence spans 428 residues: Histidinol dehydrogenase (428 aa).

NAD(+)-binding residues include Tyr125, Gln186, and Asn209. 3 residues coordinate substrate: Ser232, Gln254, and His257. Positions 254 and 257 each coordinate Zn(2+). Active-site proton acceptor residues include Glu322 and His323. His323, Asp356, Glu410, and His415 together coordinate substrate. Asp356 provides a ligand contact to Zn(2+). Zn(2+) is bound at residue His415.

This sequence belongs to the histidinol dehydrogenase family. Zn(2+) is required as a cofactor.

It catalyses the reaction L-histidinol + 2 NAD(+) + H2O = L-histidine + 2 NADH + 3 H(+). Its pathway is amino-acid biosynthesis; L-histidine biosynthesis; L-histidine from 5-phospho-alpha-D-ribose 1-diphosphate: step 9/9. Its function is as follows. Catalyzes the sequential NAD-dependent oxidations of L-histidinol to L-histidinaldehyde and then to L-histidine. The protein is Histidinol dehydrogenase of Lactiplantibacillus plantarum (strain ATCC BAA-793 / NCIMB 8826 / WCFS1) (Lactobacillus plantarum).